The sequence spans 433 residues: Ribosomal RNA small subunit methyltransferase B (433 aa).

S-adenosyl-L-methionine is bound by residues 254–260 (CAAPGGK), Asp277, Asp303, and Asp322. The active-site Nucleophile is Cys375.

Belongs to the class I-like SAM-binding methyltransferase superfamily. RsmB/NOP family.

The protein resides in the cytoplasm. The catalysed reaction is cytidine(967) in 16S rRNA + S-adenosyl-L-methionine = 5-methylcytidine(967) in 16S rRNA + S-adenosyl-L-homocysteine + H(+). In terms of biological role, specifically methylates the cytosine at position 967 (m5C967) of 16S rRNA. This is Ribosomal RNA small subunit methyltransferase B from Sodalis glossinidius (strain morsitans).